The chain runs to 481 residues: Phosphoglycerate kinase 1, chloroplastic (481 aa).

Residues 1–75 constitute a chloroplast transit peptide; that stretch reads MASAAASSAF…VRGKGSRGVV (75 aa). Serine 81 bears the Phosphoserine mark. (2R)-3-phosphoglycerate is bound by residues alanine 99, aspartate 100, asparagine 102, arginine 116, threonine 138, histidine 139, glycine 141, arginine 142, arginine 197, histidine 229, and arginine 230. Glycine 275 contributes to the ADP binding site. Residue glycine 275 participates in CDP binding. AMP-binding residues include lysine 277 and lysine 281. Position 281 (lysine 281) interacts with ATP. Glycine 299 serves as a coordination point for ADP. Glycine 299 provides a ligand contact to CDP. AMP contacts are provided by glycine 300 and glycine 372. ATP is bound by residues glycine 300 and glycine 372. CDP-binding residues include glycine 397 and phenylalanine 402. Position 402 (phenylalanine 402) interacts with ADP. Glutamate 403 lines the AMP pocket. The ATP site is built by glutamate 403, aspartate 434, and serine 435. Residue aspartate 434 coordinates Mg(2+).

The protein belongs to the phosphoglycerate kinase family. In terms of assembly, monomer. Binds to FTSZ2-1 and FTSZ2-2. Mg(2+) serves as cofactor.

It localises to the plastid. The protein resides in the chloroplast. It catalyses the reaction (2R)-3-phosphoglycerate + ATP = (2R)-3-phospho-glyceroyl phosphate + ADP. Its pathway is carbohydrate biosynthesis; Calvin cycle. Functionally, may trigger the phosphorylation of FTSZ2-1 and FTSZ2-2. The polypeptide is Phosphoglycerate kinase 1, chloroplastic (Arabidopsis thaliana (Mouse-ear cress)).